The sequence spans 384 residues: MVPELIAETAVTHFSDVYRPVQVVHKMIDKLKRKRDHSVKDVPQLQMANLSDNPTAQIIRAPKRTKLDAMLEGIMRVGDDMYDHAQPDNFSPLALIPVVNEKGHSPLSLIDLHAANEASNGLITGSGYAHTPYQADLADAHIIKIQQGTAYYEIDSQLMAQEFGDKSFGAFADEAYASERGYAIRTNPHTGNKEMFVAGTRNGWDWASNALEVTGASHILNNPVHSGVRAGEVGYMYATGNPVPPEYLGLAEKVADTIETPNGRIATPWRAKAQEFYSQVVVDEEVDVVYGHSRGGAIVADMQLPAAVTKIGLDSAMILADNKGMINFYQGGRGFDPGHPIAWFKSQVDMALGSTGENNIHLEVEGMHTHELWNHDSEDYMLEP.

The sequence is that of Viral protein 1 from Chaetoceros setoense (Chaetoceros setoense DNA virus).